Here is a 432-residue protein sequence, read N- to C-terminus: Pachytene checkpoint protein 2 homolog (432 aa).

Residue 179 to 186 (GPPGTGKT) coordinates ATP.

The protein belongs to the AAA ATPase family. PCH2 subfamily.

Plays a key role in chromosome recombination and chromosome structure development during meiosis. Required at early steps in meiotic recombination that leads to non-crossovers pathways. Also needed for efficient completion of homologous synapsis by influencing crossover distribution along the chromosomes affecting both crossovers and non-crossovers pathways. The sequence is that of Pachytene checkpoint protein 2 homolog (trip13) from Xenopus tropicalis (Western clawed frog).